Reading from the N-terminus, the 555-residue chain is WRKY transcription factor WRKY24 (555 aa).

Disordered stretches follow at residues 133-183 and 197-248; these read TAPA…AGAN and SEMA…CTFP. The span at 163 to 183 shows a compositional bias: low complexity; the sequence is QQQQQPWGYQQQPAGMDAGAN. The segment at residues 214–278 is a DNA-binding region (WRKY 1); it reads SQRRSSDDGY…YKGTHNHAKP (65 aa). Residues 253-259 carry the Nuclear localization signal motif; that stretch reads KKKVERS. Residues 270-365 form a disordered region; sequence KGTHNHAKPQ…DGEGISMAGN (96 aa). Polar residues-rich tracts occupy residues 277–294 and 310–320; these read KPQNTRRNSGSSAAQVLQ and TAATPENSSAS. Residues 347 to 356 show a composition bias toward basic and acidic residues; sequence DSKRWRKDGD. The WRKY 2 DNA-binding region spans 379-444; it reads SDIDILDDGY…YEGKHNHDVP (66 aa). The transcription repression of gibberellic acid (GA)-induced promoters stretch occupies residues 466–555; sequence HPYLPNQPPP…DDMFFQNSLY (90 aa). Positions 514-555 are disordered; it reads FDDARGSYMSQHQQQQRQNDAMHASRAKEEPGDDMFFQNSLY.

The protein belongs to the WRKY group II-a family. As to expression, expressed in aleurone cells. Mostly expressed in aleurone layers and leaves, and, to a lower extent, in roots, panicles and embryos.

It is found in the nucleus. Functionally, transcription activator. Interacts specifically with the W box (5'-(T)TGAC[CT]-3'), a frequently occurring elicitor-responsive cis-acting element. Negative regulator of both gibberellic acid (GA) and abscisic acid (ABA) signaling in aleurone cells, probably by interfering with GAM1, via the specific repression of GA- and ABA-induced promoters. This Oryza sativa subsp. japonica (Rice) protein is WRKY transcription factor WRKY24.